The primary structure comprises 112 residues: MYB-like transcription factor ETC2 (112 aa).

The Myb-like domain occupies 41 to 78 (TEQEEDLISRMYRLVGNRWDLIAGRVVGRKANEIERYW).

In terms of assembly, interacts with GL3. Expressed in stomatal guard mother cells, young stomata and trichomes of young leaves, and inflorescences.

The protein resides in the nucleus. Functionally, MYB-type transcription factor involved in epidermal cell fate specification. Acts as a negative regulator of trichome development, by mediating lateral inhibition. Promotes the formation of hair developing cells in H position in root epidermis, probably by inhibiting non-hair cell formation. The protein is MYB-like transcription factor ETC2 (ETC2) of Arabidopsis thaliana (Mouse-ear cress).